Here is a 150-residue protein sequence, read N- to C-terminus: 3-dehydroquinate dehydratase (150 aa).

Residue tyrosine 26 is the Proton acceptor of the active site. Asparagine 77, histidine 83, and aspartate 90 together coordinate substrate. The active-site Proton donor is histidine 103. Residues 104–105 (LS) and arginine 114 contribute to the substrate site.

The protein belongs to the type-II 3-dehydroquinase family. As to quaternary structure, homododecamer.

It catalyses the reaction 3-dehydroquinate = 3-dehydroshikimate + H2O. The protein operates within metabolic intermediate biosynthesis; chorismate biosynthesis; chorismate from D-erythrose 4-phosphate and phosphoenolpyruvate: step 3/7. In terms of biological role, catalyzes a trans-dehydration via an enolate intermediate. The sequence is that of 3-dehydroquinate dehydratase from Citrobacter koseri (strain ATCC BAA-895 / CDC 4225-83 / SGSC4696).